The chain runs to 138 residues: Odorant-binding protein 22 (138 aa).

An N-terminal signal peptide occupies residues 1-16 (MKVFIAVFALIAVAAA). Residue arginine 30 coordinates (5Z,8Z,11Z,14Z)-eicosatetraenoate. Residues arginine 30 and tyrosine 61 each coordinate (9Z)-hexadecenoate. 2 residues coordinate (9Z,12Z)-octadecadienoate: arginine 30 and tyrosine 61. Disulfide bonds link cysteine 33–cysteine 64, cysteine 60–cysteine 113, and cysteine 103–cysteine 122. Asparagine 127 is a glycosylation site (N-linked (GlcNAc...) asparagine).

It belongs to the PBP/GOBP family. In terms of assembly, monomer in solution. As to expression, high-level expression in female mouth parts, particularly in the proboscis (at protein level). Moderate-level expression in female antenna (at protein level). Expressed in testis but not in the accessory gland or ejaculatory duct (at protein level). Expressed in spermathecae (at protein level). Female salivary gland. Female chemosensory organs: antenna, palp and proboscis. Not detected in midgut.

It is found in the secreted. Functionally, involved in modulation of blood-feeding behavior and capacity in female mosquitoes. Required for normal oviposition. Required for normal fecundity and fertility of female and male mosquitoes. Required for normal expression of VGA1 gene, which encodes the egg yolk protein vitellogenin-A1. Involved in regulation of spermatozoa development. Required for normal female longevity when mosquitoes are maintained on regular sugar meal. Binds long chain fatty acids. Its function is as follows. (Microbial infection) Facilitates shedding of dengue virus type 2 particles into mosquito saliva. Does not affect dengue virus type 2 replication or infection prevalence in midgut and salivary glands at 14 days after blood feeding. (Microbial infection) Facilitates shedding of Zika virus particles into mosquito saliva. Does not affect Zika virus replication or infection prevalence in midgut and salivary glands at 14 days after blood feeding. The sequence is that of Odorant-binding protein 22 from Aedes aegypti (Yellowfever mosquito).